A 642-amino-acid polypeptide reads, in one-letter code: Protein INCREASED PETAL GROWTH ANISOTROPY 1 (642 aa).

The disordered stretch occupies residues 1–60 (MVAGKVRVTMGFHKSPSTKKTKDMPSPLPLPPPPPPPLKPPSSGSATTKPPINPSKPGFT). Positions 26–40 (SPLPLPPPPPPPLKP) are enriched in pro residues. A coiled-coil region spans residues 80–183 (AASHNGVVSE…EAEIVELRKL (104 aa)). Residues 223–351 (NLPEPITNQE…PPKSLSIASA (129 aa)) are disordered. Residues 247 to 256 (DIYRKDEIES) are compositionally biased toward basic and acidic residues. The segment covering 258 to 277 (SRSSNSEELTESSSLSTVRS) has biased composition (low complexity). A compositionally biased stretch (pro residues) spans 302–344 (DPPPQKSIPPPPPPPPPPLLQQPPPPPSVSKAPPPPPPPPPPK).

Belongs to the IPGA1 family. As to quaternary structure, associates to cortical microtubules via its N-terminal region. Interacts with ANGUSTIFOLIA (AN) on microtubule upon mechanical stress to regulate microtubule organization. Binds to the microtubule-severing enzyme KATANIN (KTN1). In terms of tissue distribution, expressed ubiquitously at all development stages, with highest in developing petals. During mechanical stress, accumulates in granules on microtubules.

It localises to the cytoplasm. The protein resides in the cytoskeleton. Its subcellular location is the cytosol. The protein localises to the cell membrane. In terms of biological role, microtubule-associated protein involved in the regulation of anisotropic petal and cotyledons growth and shape by affecting cortical microtubule organization. Prevents cortical microtubules organization into parallel arrays oriented perpendicular to the axis of cell elongation thus limiting anisotropic cell growth in the late phases of petal development. Cooperatively with ANGUSTIFOLIA (AN), negatively regulates cortical microtubules (CMTs) organization in response to mechanical stress and modulates pavement cells morphogenesis leading to puzzle shape, probably in an AAA1/KTN1-dependent manner. This is Protein INCREASED PETAL GROWTH ANISOTROPY 1 from Arabidopsis thaliana (Mouse-ear cress).